Consider the following 90-residue polypeptide: Small ribosomal subunit protein uS15c (90 aa).

The protein belongs to the universal ribosomal protein uS15 family. Part of the 30S ribosomal subunit.

It is found in the plastid. The protein localises to the chloroplast. The sequence is that of Small ribosomal subunit protein uS15c (rps15) from Acorus calamus (Sweet flag).